A 222-amino-acid polypeptide reads, in one-letter code: Ras-related protein RabT1 (222 aa).

37–44 (GDNKTGKS) lines the GTP pocket. The Effector region signature appears at 59–66 (VSSIGVDF). Residues 85–89 (DVNSC) and 145–148 (NKCD) each bind GTP. At cysteine 219 the chain carries Cysteine methyl ester. The S-geranylgeranyl cysteine moiety is linked to residue cysteine 219. Positions 220-222 (NIL) are cleaved as a propeptide — removed in mature form.

Belongs to the small GTPase superfamily. Rab family.

Its subcellular location is the cell membrane. This is Ras-related protein RabT1 (rabT1) from Dictyostelium discoideum (Social amoeba).